A 1957-amino-acid polypeptide reads, in one-letter code: Chromatin modification-related protein EAF1 A (1957 aa).

Disordered stretches follow at residues 108 to 208 (ASPH…TDLV), 261 to 287 (NRVS…GSKT), 323 to 373 (GGSP…SHAN), and 449 to 469 (NQSH…ETEK). Positions 140-151 (SENKSVEGERNL) are enriched in basic and acidic residues. 3 stretches are compositionally biased toward polar residues: residues 261–270 (NRVSSNSLNT), 333–342 (GQKNSSTQLN), and 355–372 (TNRG…SSHA). The HSA domain occupies 563–641 (CGTAPVEVRE…LSNAILQFWS (79 aa)). Disordered stretches follow at residues 833-909 (GSNS…AVQK) and 928-950 (AETS…DQTW). Residues 884–898 (TDASSGDTSSFQDEY) are compositionally biased toward polar residues. An SANT domain is found at 1049–1105 (SGNPWSLFEDQALVVLVHDMGPNWELISDAMNSTLKIKCIYRNPTECKDRHKILMDK). Disordered regions lie at residues 1107-1131 (AGDG…PGIP), 1282-1314 (TPVL…GLQS), 1344-1367 (LSGR…DRGH), 1449-1644 (QGNS…QQLN), 1687-1768 (PVRP…IAPA), 1804-1840 (ELSK…PQAS), and 1876-1957 (SSNT…TKVE). Composition is skewed to polar residues over residues 1116–1125 (DSGNSQSYPS), 1290–1314 (AHPS…GLQS), 1344–1358 (LSGR…STPA), 1459–1472 (SNLS…TTPV), 1479–1492 (LSQQ…SHVL), and 1501–1510 (QSPSQATGAQ). 2 stretches are compositionally biased toward low complexity: residues 1523 to 1534 (QRYLQQQQQQQQ) and 1545 to 1562 (VQQP…NSPQ). Residues 1563–1579 (TQPPVSPQPLSMPPVSP) are compositionally biased toward pro residues. Composition is skewed to polar residues over residues 1582-1595 (NINA…QKSQ), 1604-1618 (SPQS…QAGK), 1635-1644 (RQPTQGQQLN), 1691-1722 (DQQS…QQLP), and 1734-1758 (QQQM…CNIL). Positions 1759–1768 (STSSPSIAPA) are enriched in low complexity. Over residues 1805 to 1815 (LSKKSQAERMP) the composition is skewed to basic and acidic residues. Composition is skewed to polar residues over residues 1819 to 1832 (QSVT…SMGT) and 1876 to 1894 (SSNT…NQGL). Basic and acidic residues-rich tracts occupy residues 1913-1922 (SEEKRPKLPE) and 1932-1942 (LASEEQPHLEE).

Belongs to the EAF1 family. As to quaternary structure, component of the NuA4 histone acetyltransferase complex. Interacts with ARP4 and SWC4, and (via HSA domain) with TAF14 and TAF14B. In terms of tissue distribution, expressed in leaves.

It localises to the nucleus. Its function is as follows. Component of the NuA4 histone acetyltransferase complex which is involved in transcriptional activation of selected genes principally by acetylation of nucleosomal histone H4 and H2A. In Arabidopsis thaliana (Mouse-ear cress), this protein is Chromatin modification-related protein EAF1 A (EAF1A).